Reading from the N-terminus, the 89-residue chain is Small ribosomal subunit protein uS19 (89 aa).

The protein belongs to the universal ribosomal protein uS19 family.

Functionally, protein S19 forms a complex with S13 that binds strongly to the 16S ribosomal RNA. The chain is Small ribosomal subunit protein uS19 from Xylella fastidiosa (strain M12).